Here is a 254-residue protein sequence, read N- to C-terminus: Type II restriction enzyme HpaI (254 aa).

It catalyses the reaction Endonucleolytic cleavage of DNA to give specific double-stranded fragments with terminal 5'-phosphates.. In terms of biological role, a P subtype restriction enzyme that recognizes the double-stranded sequence 5'-GTTAAC-3' and cleaves after T-3. The sequence is that of Type II restriction enzyme HpaI (hpaIR) from Haemophilus parainfluenzae.